A 65-amino-acid chain; its full sequence is Large ribosomal subunit protein bL35 (65 aa).

A disordered region spans residues M1–I22.

It belongs to the bacterial ribosomal protein bL35 family.

The chain is Large ribosomal subunit protein bL35 from Flavobacterium psychrophilum (strain ATCC 49511 / DSM 21280 / CIP 103535 / JIP02/86).